Here is a 59-residue protein sequence, read N- to C-terminus: MNFNKLFLIVILAALLLLGQTEAGRLKKLGKKIEKAGKRVFNAVQKGLPVAAGVQALGR.

An N-terminal signal peptide occupies residues 1–23 (MNFNKLFLIVILAALLLLGQTEA). Leu-57 carries the post-translational modification Leucine amide.

Belongs to the cecropin family.

Its subcellular location is the secreted. Functionally, cecropins have lytic and antibacterial activity against several Gram-positive and Gram-negative bacteria. In Culex pipiens pipiens (Northern house mosquito), this protein is Cecropin-B1 (CECB1).